Consider the following 137-residue polypeptide: Small ribosomal subunit protein uS12 (137 aa).

The segment at 1-57 (MPTINQLVRKPRKSKVEKPKSPALNVGYNSHKKVQTNVSSPQKRGVATRVGTMTPRK) is disordered. Asp-102 is modified (3-methylthioaspartic acid).

Belongs to the universal ribosomal protein uS12 family. Part of the 30S ribosomal subunit. Contacts proteins S8 and S17. May interact with IF1 in the 30S initiation complex.

In terms of biological role, with S4 and S5 plays an important role in translational accuracy. Interacts with and stabilizes bases of the 16S rRNA that are involved in tRNA selection in the A site and with the mRNA backbone. Located at the interface of the 30S and 50S subunits, it traverses the body of the 30S subunit contacting proteins on the other side and probably holding the rRNA structure together. The combined cluster of proteins S8, S12 and S17 appears to hold together the shoulder and platform of the 30S subunit. This chain is Small ribosomal subunit protein uS12, found in Streptococcus pneumoniae (strain Hungary19A-6).